Reading from the N-terminus, the 362-residue chain is NAD(P)H-quinone oxidoreductase subunit 1, chloroplastic (362 aa).

8 helical membrane-spanning segments follow: residues 27-47 (IWIL…LVIV), 103-123 (IAVI…HFVL), 128-148 (IGVF…LMAG), 164-184 (AAQS…ISLL), 202-222 (FFGW…ISSL), 247-267 (YSGI…LVSS), 303-323 (VIGI…SITI), and 342-362 (FLLP…LVSL).

This sequence belongs to the complex I subunit 1 family. NDH is composed of at least 16 different subunits, 5 of which are encoded in the nucleus.

It is found in the plastid. It localises to the chloroplast thylakoid membrane. The enzyme catalyses a plastoquinone + NADH + (n+1) H(+)(in) = a plastoquinol + NAD(+) + n H(+)(out). The catalysed reaction is a plastoquinone + NADPH + (n+1) H(+)(in) = a plastoquinol + NADP(+) + n H(+)(out). In terms of biological role, NDH shuttles electrons from NAD(P)H:plastoquinone, via FMN and iron-sulfur (Fe-S) centers, to quinones in the photosynthetic chain and possibly in a chloroplast respiratory chain. The immediate electron acceptor for the enzyme in this species is believed to be plastoquinone. Couples the redox reaction to proton translocation, and thus conserves the redox energy in a proton gradient. This chain is NAD(P)H-quinone oxidoreductase subunit 1, chloroplastic, found in Saccharum hybrid (Sugarcane).